Reading from the N-terminus, the 210-residue chain is Probable GTP-binding protein EngB (210 aa).

The 175-residue stretch at 25–199 (CGIEVAFAGR…RQKLDSWFSE (175 aa)) folds into the EngB-type G domain. GTP is bound by residues 33–40 (GRSNAGKS), 60–64 (GRTQL), 78–81 (DLPG), 145–148 (TKAD), and 178–180 (FSS). The Mg(2+) site is built by Ser40 and Thr62.

The protein belongs to the TRAFAC class TrmE-Era-EngA-EngB-Septin-like GTPase superfamily. EngB GTPase family. Mg(2+) serves as cofactor.

Its function is as follows. Necessary for normal cell division and for the maintenance of normal septation. This chain is Probable GTP-binding protein EngB, found in Salmonella dublin (strain CT_02021853).